The sequence spans 107 residues: Small ribosomal subunit protein uS17 (107 aa).

This sequence belongs to the universal ribosomal protein uS17 family. Part of the 30S ribosomal subunit.

Functionally, one of the primary rRNA binding proteins, it binds specifically to the 5'-end of 16S ribosomal RNA. This chain is Small ribosomal subunit protein uS17, found in Thermotoga sp. (strain RQ2).